A 240-amino-acid chain; its full sequence is NKG2-E type II integral membrane protein (240 aa).

Residues 1-12 (MSKQRGTFSEVS) are compositionally biased toward polar residues. The interval 1-31 (MSKQRGTFSEVSLAQDPKWQQRKPKGNKSSI) is disordered. Topologically, residues 1 to 70 (MSKQRGTFSE…CQGLLPPPEK (70 aa)) are cytoplasmic. A helical; Signal-anchor for type II membrane protein membrane pass occupies residues 71–93 (LTAEVLGIICIVLMATVLKTIVL). Residues 94–240 (IPFLEQNNSS…IMLTRLVLNS (147 aa)) lie on the Extracellular side of the membrane. N100 carries N-linked (GlcNAc...) asparagine glycosylation. In terms of domain architecture, C-type lectin spans 116–230 (HCPEEWITYS…GSSRIIRRGF (115 aa)). C117 and C128 are joined by a disulfide. N-linked (GlcNAc...) asparagine glycans are attached at residues N149 and N179. A disulfide bond links C207 and C220.

As to quaternary structure, can form disulfide-bonded heterodimer with CD94. Natural killer cells.

The protein localises to the membrane. Functionally, plays a role as a receptor for the recognition of MHC class I HLA-E molecules by NK cells and some cytotoxic T-cells. This chain is NKG2-E type II integral membrane protein (KLRC3), found in Homo sapiens (Human).